Reading from the N-terminus, the 303-residue chain is MSFTVKVKEELLGHKSENKMELSAIIKMSGSLGLANHGLNLSITTENAKIARHIYSMLEEHYHLQPEIKYHQKTNLRKNRVYTVFIEEKVDVILADLKLADAFFGIETGIEHSILDNDENGRAYLRGAFLSTGTVREPDSGKYQLEIFSVYLDHAQDLANLMKKFMLDAKVIEHKHGAVTYLQKAEDIMDFLIVIDAMEARDAFEEIKMIRETRNDINRANNVETANIARTITASMKTINNIIKIMDTIGFDALPSDLRQVAQVRVAHPDYSIQQIADSLETPLSKSGVNHRLRKINKIADEL.

The segment at residues 272-303 (SIQQIADSLETPLSKSGVNHRLRKINKIADEL) is a DNA-binding region (H-T-H motif).

It belongs to the WhiA family.

Its function is as follows. Involved in cell division and chromosome segregation. This chain is Probable cell division protein WhiA, found in Streptococcus agalactiae serotype Ia (strain ATCC 27591 / A909 / CDC SS700).